A 615-amino-acid polypeptide reads, in one-letter code: Angiotensin-converting enzyme (615 aa).

Positions 1–17 (MRLFLLALLATLAVTQA) are cleaved as a signal peptide. Residues 19–607 (VKEEIQAKEY…IKNNVHIGWT (589 aa)) form the Peptidase M2 domain. Asn53 carries N-linked (GlcNAc...) asparagine glycosylation. An intrachain disulfide couples Cys133 to Cys141. Asn196 and Asn311 each carry an N-linked (GlcNAc...) asparagine glycan. Residues Cys336 and Cys354 are joined by a disulfide bond. A Zn(2+)-binding site is contributed by His367. Glu368 acts as the Proton acceptor in catalysis. Residues His371 and Glu395 each coordinate Zn(2+). His497 (proton donor) is an active-site residue. Cys522 and Cys540 are joined by a disulfide.

The protein belongs to the peptidase M2 family. It depends on Zn(2+) as a cofactor. In terms of processing, glycosylated. In terms of tissue distribution, expressed in vesicular structures in spermatocytes and early spermatids (at protein level).

The protein localises to the secreted. It localises to the extracellular space. The enzyme catalyses Release of a C-terminal dipeptide, oligopeptide-|-Xaa-Yaa, when Xaa is not Pro, and Yaa is neither Asp nor Glu. Thus, conversion of angiotensin I to angiotensin II, with increase in vasoconstrictor activity, but no action on angiotensin II.. With respect to regulation, inhibited by captopril and, to a lesser extent, by lisinopril, trandolaprilat, fosinoprilat and enalaprilat. In terms of biological role, may be involved in the specific maturation or degradation of a number of bioactive peptides. May play a role in the contractions of the heart, gut and testes, and in spermatid differentiation. The chain is Angiotensin-converting enzyme (Ance) from Drosophila melanogaster (Fruit fly).